The following is a 1072-amino-acid chain: MLRDGNEGMFTIPGFSQIQFEGFCRFINQGLMEEFNKFPKIEDTDQEIEFKLFVETYQLAEPLIKERDAVYESLTYSSELYVLAGLIWKTNRDMKEQTVFIGNIPLMNSLGTFIVNGIYRIVINQILQSPGIYYRSELDHNGISVYTSTIISDWGGRSELEIDRKARIWARVSRKQKISILVLLSAMGLNLREILDNVCYPEIFLSFLNDKEKKKIGSKENAILEFYQQFACVGGDPVFSESLCKELQKKFFQQRCELGRIGRRNINQRLNLDIPHNNTFLLPRDVLAAADHLIGMKFGMGTLDDMNHLKNKRIRSVADLLQDQFGLALVRLENAVRGTISGAIRHKLIPTPQNLVTSTSLTTTYESFFGLHPLSQVLDRTNPLTQIVHGRKLSYLGPGGVTGRTASFRIRDIHPSHYGRICPIDTSEGINVGLIGSLAIHVRIGHWGSIETPFYEISERSKEKEARMIYLSPSRDEYYMIAAGNSLALNRGIQEEQVVPARYRQEFLTIAWEQVHLRSIFPFQYFSIGASLIPFIEHNDANRALMSSNMQRQAVPLSRSEKCIVGTGLERQAALDSGVSVIAEHEGKVISTDTHQIVFSGNGNTLNIPLVMYQRSNKNTCMHQKPQVQRGKYVKKGQILADGAATVGGELALGKNVLVAYMPWEGYNFEDAVLISERLVYSDIYTSFHIRKYEIQTHMTSQGPERITNEIPHLEAHLLRNLDRNGIVMLGSWVETGDILVGKLTPQIANESSYAPEDRLLRAILGIQVSTAKETSLKLPIGGRGRVIDVRWIQKKGGSSYNPEIIRVYILQKREIKVGDKVAGRHGNKGIISKILPRQDMPYLQDGTPVDMVFNPLGVPSRMNVGQIFECSLGLAGDLLNRHYRIAPFDERYEQEASRKLVFSELYEASKQTKNPWVFEPEYPGKSKIFDGRTGDPFEQAVLIGKSYILKLIHQVDDKIHGRSSGHYALVTQQPLRGRAKQGGQRVGEMEVWALEGFGVAHILQEMLTYKSDHIRARQEVLGTTIIGGTIVNPEDAPESFRLLVRELRSLALELNHFLVSEKNFQINRKEA.

Belongs to the RNA polymerase beta chain family. In terms of assembly, in plastids the minimal PEP RNA polymerase catalytic core is composed of four subunits: alpha, beta, beta', and beta''. When a (nuclear-encoded) sigma factor is associated with the core the holoenzyme is formed, which can initiate transcription.

It is found in the plastid. It localises to the chloroplast. It catalyses the reaction RNA(n) + a ribonucleoside 5'-triphosphate = RNA(n+1) + diphosphate. Functionally, DNA-dependent RNA polymerase catalyzes the transcription of DNA into RNA using the four ribonucleoside triphosphates as substrates. This chain is DNA-directed RNA polymerase subunit beta, found in Lemna minor (Common duckweed).